The chain runs to 340 residues: Protein HP_1247 (340 aa).

As to quaternary structure, seems to interact with H.pylori HolB.

Functionally, could be the functional equivalent of DNA polymerase III delta subunit (HolA). This chain is Protein HP_1247, found in Helicobacter pylori (strain ATCC 700392 / 26695) (Campylobacter pylori).